A 310-amino-acid chain; its full sequence is MGNQVEKLTHLSYKEVPTADPTGVDRDDGPRIGVSYIFSNDDEDVEPQPPPQGPDGGGLPDGGDGPPPPQPQPYDPRLHEVECSVFYRDECIYQKSFAPGSAALSTYTPENLLNKCKPGDLVEFVSQAQYPHWAVYVGNFQVVHLHRLEVINSFLTDASQGRRGRVVNDLYRYKPLSSSAVVRNALAHVGAKERELSWRNSESFAAWCRYGKREFKIGGELRIGKQPYRLQIQLSAQRSHTLEFQSLEDLIMEKRRNDQIGRAAVLQELATHLHPAEPEEGDSNVARTTPPPGRPPAPSSEEEDGEAVAH.

The disordered stretch occupies residues 1–76 (MGNQVEKLTH…PPPQPQPYDP (76 aa)). Gly residues predominate over residues 54-64 (PDGGGLPDGGD). A compositionally biased stretch (pro residues) spans 65–74 (GPPPPQPQPY). The LRAT domain maps to 122-217 (VEFVSQAQYP…CRYGKREFKI (96 aa)). The tract at residues 274 to 310 (HPAEPEEGDSNVARTTPPPGRPPAPSSEEEDGEAVAH) is disordered. The span at 289-298 (TPPPGRPPAP) shows a compositional bias: pro residues. Positions 300–310 (SEEEDGEAVAH) are enriched in acidic residues.

The protein belongs to the LRATD family. Expressed in esophageal squamous cell carcinomas.

This is Protein LRATD2 from Homo sapiens (Human).